The chain runs to 133 residues: MGFYQGPDNRKITGGLKGKHRDKRKYEIGNPSTLTTLSAEDIRIKDRTLGGNFKVRLKYTTTANVLDPATNTAKKVKILEVLETPANKELARRGIIIRGAKIRTEAGLAVVTSRPGQDGVINAVLLKNESQGS.

The segment at 1 to 22 (MGFYQGPDNRKITGGLKGKHRD) is disordered.

This sequence belongs to the eukaryotic ribosomal protein eS8 family. In terms of assembly, part of the 30S ribosomal subunit.

This is Small ribosomal subunit protein eS8 from Saccharolobus islandicus (strain Y.N.15.51 / Yellowstone #2) (Sulfolobus islandicus).